The sequence spans 197 residues: Small ribosomal subunit protein uS4 (197 aa).

The S4 RNA-binding domain occupies 94 to 158; that stretch reads RRLDNVIYRF…LKKYLYDYKN (65 aa).

This sequence belongs to the universal ribosomal protein uS4 family. In terms of assembly, part of the 30S ribosomal subunit. Contacts protein S5. The interaction surface between S4 and S5 is involved in control of translational fidelity.

In terms of biological role, one of the primary rRNA binding proteins, it binds directly to 16S rRNA where it nucleates assembly of the body of the 30S subunit. Its function is as follows. With S5 and S12 plays an important role in translational accuracy. This chain is Small ribosomal subunit protein uS4 (rpsD), found in Carsonella ruddii (strain PV).